We begin with the raw amino-acid sequence, 161 residues long: MAEVANNEQQAPQFNIQRVYTKDVSFETPNSPAVFQKEWNPEVKLDLDTRSAKLADDVYEVVLSLTVTAQNGGETAFLCEVQQAGIFSISGLTEPQLAHSLGAYCPNILFPYAREAVGSLVGRGTFPQLNLAPVNFDALFAQYVQQRQAAATAPAAEEANA.

Belongs to the SecB family. Homotetramer, a dimer of dimers. One homotetramer interacts with 1 SecA dimer.

It is found in the cytoplasm. One of the proteins required for the normal export of preproteins out of the cell cytoplasm. It is a molecular chaperone that binds to a subset of precursor proteins, maintaining them in a translocation-competent state. It also specifically binds to its receptor SecA. The chain is Protein-export protein SecB from Shewanella putrefaciens (strain CN-32 / ATCC BAA-453).